Here is a 112-residue protein sequence, read N- to C-terminus: C-C motif chemokine 27 (112 aa).

The signal sequence occupies residues 1–24; sequence MKGPPTFCSLLLLSLLLSPDPTAA. Cystine bridges form between Cys33–Cys62 and Cys34–Cys77.

The protein belongs to the intercrine beta (chemokine CC) family. In terms of assembly, monomer, dimer, and tetramer. Heparin avidly promotes oligomerization. Interacts with TNFAIP6 (via Link domain). Testis, thymus, placenta, ovary and skin.

The protein localises to the secreted. Its function is as follows. Chemotactic factor that attracts skin-associated memory T-lymphocytes. May play a role in mediating homing of lymphocytes to cutaneous sites. Binds to CCR10. The chain is C-C motif chemokine 27 (CCL27) from Homo sapiens (Human).